We begin with the raw amino-acid sequence, 133 residues long: Ribonuclease P protein component (133 aa).

It belongs to the RnpA family. As to quaternary structure, consists of a catalytic RNA component (M1 or rnpB) and a protein subunit.

It carries out the reaction Endonucleolytic cleavage of RNA, removing 5'-extranucleotides from tRNA precursor.. In terms of biological role, RNaseP catalyzes the removal of the 5'-leader sequence from pre-tRNA to produce the mature 5'-terminus. It can also cleave other RNA substrates such as 4.5S RNA. The protein component plays an auxiliary but essential role in vivo by binding to the 5'-leader sequence and broadening the substrate specificity of the ribozyme. The polypeptide is Ribonuclease P protein component (Pseudomonas fluorescens (strain Pf0-1)).